We begin with the raw amino-acid sequence, 327 residues long: GPI-linked NAD(P)(+)--arginine ADP-ribosyltransferase 1 (327 aa).

An N-terminal signal peptide occupies residues 1-22 (MQMPAMMSLLLVSVGLMEALQA). Intrachain disulfides connect cysteine 53–cysteine 277 and cysteine 174–cysteine 224. Asparagine 65 carries N-linked (GlcNAc...) asparagine glycosylation. A TR mART core domain is found at 73 to 273 (QVYADSWTLA…IYLRALGKHS (201 aa)). Residues tyrosine 121 and arginine 179 each contribute to the NAD(+) site. Residues arginine 179 and serine 202 contribute to the active site. Serine 233 is an NAD(+) binding site. The active site involves glutamate 240. A glycan (N-linked (GlcNAc...) asparagine) is linked at asparagine 253. Residue serine 295 is the site of GPI-anchor amidated serine attachment. The propeptide at 296–327 (AMGQSPLSAVWSLLLLLWFLVVRAFPDGPGLL) is removed in mature form.

The protein belongs to the Arg-specific ADP-ribosyltransferase family.

It is found in the sarcoplasmic reticulum membrane. It catalyses the reaction L-arginyl-[protein] + NAD(+) = N(omega)-(ADP-D-ribosyl)-L-arginyl-[protein] + nicotinamide + H(+). In terms of biological role, has ADP-ribosyltransferase activity toward GLP1R. This is GPI-linked NAD(P)(+)--arginine ADP-ribosyltransferase 1 (ART1) from Homo sapiens (Human).